A 742-amino-acid polypeptide reads, in one-letter code: Tegument protein UL47 (742 aa).

Positions Met1–Glu10 are enriched in basic and acidic residues. Disordered regions lie at residues Met1–Leu128 and Glu155–Ala199. The Nuclear localization signal motif lies at Glu10–Arg30. Residues Thr18–Leu37 show a composition bias toward low complexity. Basic and acidic residues predominate over residues Arg38–Asp62. The segment covering Glu63 to Ser88 has biased composition (acidic residues). The short motif at Arg95–Asp122 is the Nuclear export signal element. Residues Leu485–Leu495 carry the Nuclear export signal motif.

Belongs to the alphaherpesvirinae HHV-1 UL47 family. Interacts with US3 kinase. Interacts with UL31 and UL34; these interactions seem important for efficient virion nuclear egress. Interacts with UL41/VHS. Phosphorylated by US3. This phosphorylation is required for proper nuclear localization.

It is found in the virion tegument. The protein localises to the host nucleus. It localises to the host cytoplasm. In terms of biological role, tegument protein that can bind to various RNA transcripts. Plays a role in the attenuation of selective viral and cellular mRNA degradation by modulating the activity of host shutoff RNase UL41/VHS. Also plays a role in the primary envelopment of virions in the perinuclear space, probably by interacting with two nuclear egress proteins UL31 and UL34. This Bos taurus (Bovine) protein is Tegument protein UL47.